The chain runs to 491 residues: Aspartyl/glutamyl-tRNA(Asn/Gln) amidotransferase subunit B (491 aa).

It belongs to the GatB/GatE family. GatB subfamily. In terms of assembly, heterotrimer of A, B and C subunits.

The enzyme catalyses L-glutamyl-tRNA(Gln) + L-glutamine + ATP + H2O = L-glutaminyl-tRNA(Gln) + L-glutamate + ADP + phosphate + H(+). The catalysed reaction is L-aspartyl-tRNA(Asn) + L-glutamine + ATP + H2O = L-asparaginyl-tRNA(Asn) + L-glutamate + ADP + phosphate + 2 H(+). Its function is as follows. Allows the formation of correctly charged Asn-tRNA(Asn) or Gln-tRNA(Gln) through the transamidation of misacylated Asp-tRNA(Asn) or Glu-tRNA(Gln) in organisms which lack either or both of asparaginyl-tRNA or glutaminyl-tRNA synthetases. The reaction takes place in the presence of glutamine and ATP through an activated phospho-Asp-tRNA(Asn) or phospho-Glu-tRNA(Gln). This Paraburkholderia xenovorans (strain LB400) protein is Aspartyl/glutamyl-tRNA(Asn/Gln) amidotransferase subunit B.